Consider the following 164-residue polypeptide: Large ribosomal subunit protein eL24 (164 aa).

2 disordered regions span residues 63–82 (KDAA…KPYS) and 117–164 (ERIK…GGKA). Residues 71–81 (KKRRRATKKPY) are compositionally biased toward basic residues. Basic and acidic residues predominate over residues 117 to 133 (ERIKKTKDEKKAKKAEV).

This sequence belongs to the eukaryotic ribosomal protein eL24 family.

It is found in the cytoplasm. The chain is Large ribosomal subunit protein eL24 (RPL24) from Cicer arietinum (Chickpea).